The sequence spans 378 residues: UDP-N-acetylenolpyruvoylglucosamine reductase (378 aa).

The FAD-binding PCMH-type domain maps to 15 to 185; it reads VGGTPERLLE…LSVDLELADH (171 aa). Residue Arg163 is part of the active site. Ser248 functions as the Proton donor in the catalytic mechanism. Residue Glu370 is part of the active site.

It belongs to the MurB family. Requires FAD as cofactor.

Its subcellular location is the cytoplasm. It catalyses the reaction UDP-N-acetyl-alpha-D-muramate + NADP(+) = UDP-N-acetyl-3-O-(1-carboxyvinyl)-alpha-D-glucosamine + NADPH + H(+). Its pathway is cell wall biogenesis; peptidoglycan biosynthesis. Functionally, cell wall formation. This is UDP-N-acetylenolpyruvoylglucosamine reductase from Leifsonia xyli subsp. xyli (strain CTCB07).